The primary structure comprises 1107 residues: Enolase-phosphatase E1 (1107 aa).

Mg(2+)-binding residues include Asp-19 and Glu-21. Substrate is bound by residues Ser-152–Ser-153 and Lys-186. Asp-211 contributes to the Mg(2+) binding site. The segment at Ser-258–Ser-1107 is disordered. Over residues Lys-260–Glu-289 the composition is skewed to basic and acidic residues. Residues Glu-291–Gly-306 are compositionally biased toward low complexity. Over residues Asp-366–Asp-376 the composition is skewed to acidic residues. Basic and acidic residues-rich tracts occupy residues Val-393–Gln-427 and Gly-435–Glu-462. Residues Asp-475–Ala-485 are compositionally biased toward acidic residues. Composition is skewed to basic and acidic residues over residues Val-486 to Asn-512, Asp-534 to Ser-548, Thr-572 to Glu-586, Thr-593 to Asn-604, Lys-610 to Ala-686, and Asp-693 to Asp-776. Residues Glu-794–Gln-803 show a composition bias toward low complexity. 2 stretches are compositionally biased toward basic and acidic residues: residues Ala-804 to Ser-838 and Lys-849 to Gly-908. Positions Val-909–Glu-919 are enriched in low complexity. Residues Val-920–Ser-935 show a composition bias toward acidic residues. Composition is skewed to basic and acidic residues over residues Asp-937–Ser-957, Asp-1001–Ser-1028, and Asn-1035–Asp-1047. The span at Thr-1048 to Val-1083 shows a compositional bias: low complexity.

It belongs to the HAD-like hydrolase superfamily. MasA/MtnC family. Monomer. Mg(2+) is required as a cofactor.

The protein resides in the cytoplasm. The protein localises to the nucleus. It catalyses the reaction 5-methylsulfanyl-2,3-dioxopentyl phosphate + H2O = 1,2-dihydroxy-5-(methylsulfanyl)pent-1-en-3-one + phosphate. The protein operates within amino-acid biosynthesis; L-methionine biosynthesis via salvage pathway; L-methionine from S-methyl-5-thio-alpha-D-ribose 1-phosphate: step 3/6. Its pathway is amino-acid biosynthesis; L-methionine biosynthesis via salvage pathway; L-methionine from S-methyl-5-thio-alpha-D-ribose 1-phosphate: step 4/6. Its function is as follows. Bifunctional enzyme that catalyzes the enolization of 2,3-diketo-5-methylthiopentyl-1-phosphate (DK-MTP-1-P) into the intermediate 2-hydroxy-3-keto-5-methylthiopentenyl-1-phosphate (HK-MTPenyl-1-P), which is then dephosphorylated to form the acireductone 1,2-dihydroxy-3-keto-5-methylthiopentene (DHK-MTPene). The polypeptide is Enolase-phosphatase E1 (Aedes aegypti (Yellowfever mosquito)).